The sequence spans 92 residues: Small ribosomal subunit protein uS19 (92 aa).

This sequence belongs to the universal ribosomal protein uS19 family.

Its function is as follows. Protein S19 forms a complex with S13 that binds strongly to the 16S ribosomal RNA. This chain is Small ribosomal subunit protein uS19, found in Listeria innocua serovar 6a (strain ATCC BAA-680 / CLIP 11262).